A 427-amino-acid polypeptide reads, in one-letter code: Kallistatin (427 aa).

The signal sequence occupies residues Met-1–Gly-20. 3 N-linked (GlcNAc...) asparagine glycosylation sites follow: Asn-33, Asn-108, and Asn-157. Asn-238 carries an N-linked (GlcNAc...) (complex) asparagine glycan.

This sequence belongs to the serpin family. As to quaternary structure, monomer and some homodimers. Post-translationally, the N-terminus is blocked. In terms of tissue distribution, expressed by the liver and secreted in plasma.

The protein localises to the secreted. Its function is as follows. Inhibits human amidolytic and kininogenase activities of tissue kallikrein. Inhibition is achieved by formation of an equimolar, heat- and SDS-stable complex between the inhibitor and the enzyme, and generation of a small C-terminal fragment of the inhibitor due to cleavage at the reactive site by tissue kallikrein. This chain is Kallistatin (SERPINA4), found in Homo sapiens (Human).